We begin with the raw amino-acid sequence, 355 residues long: Protein RecA (355 aa).

67–74 serves as a coordination point for ATP; the sequence is GPESSGKT. Residues 331-355 form a disordered region; it reads NQDDKPDFTPAAHEVDEGSEAKENF.

It belongs to the RecA family.

The protein resides in the cytoplasm. In terms of biological role, can catalyze the hydrolysis of ATP in the presence of single-stranded DNA, the ATP-dependent uptake of single-stranded DNA by duplex DNA, and the ATP-dependent hybridization of homologous single-stranded DNAs. It interacts with LexA causing its activation and leading to its autocatalytic cleavage. This is Protein RecA from Erwinia tasmaniensis (strain DSM 17950 / CFBP 7177 / CIP 109463 / NCPPB 4357 / Et1/99).